Here is a 408-residue protein sequence, read N- to C-terminus: tRNA-specific 2-thiouridylase MnmA (408 aa).

ATP-binding positions include 38 to 45 (GMSGGVDS) and methionine 64. The interaction with target base in tRNA stretch occupies residues 124 to 126 (NPD). The active-site Nucleophile is the cysteine 129. Cysteine 129 and cysteine 231 are oxidised to a cystine. Glycine 153 is a binding site for ATP. The segment at 181–183 (KDQ) is interaction with tRNA. The Cysteine persulfide intermediate role is filled by cysteine 231. Residues 348 to 349 (RY) form an interaction with tRNA region.

Belongs to the MnmA/TRMU family.

The protein localises to the cytoplasm. The enzyme catalyses S-sulfanyl-L-cysteinyl-[protein] + uridine(34) in tRNA + AH2 + ATP = 2-thiouridine(34) in tRNA + L-cysteinyl-[protein] + A + AMP + diphosphate + H(+). In terms of biological role, catalyzes the 2-thiolation of uridine at the wobble position (U34) of tRNA, leading to the formation of s(2)U34. This Psychrobacter cryohalolentis (strain ATCC BAA-1226 / DSM 17306 / VKM B-2378 / K5) protein is tRNA-specific 2-thiouridylase MnmA.